Consider the following 148-residue polypeptide: Aspartate carbamoyltransferase regulatory chain (148 aa).

Residues Cys-106, Cys-111, Cys-134, and Cys-137 each coordinate Zn(2+).

The protein belongs to the PyrI family. Contains catalytic and regulatory chains. The cofactor is Zn(2+).

Functionally, involved in allosteric regulation of aspartate carbamoyltransferase. This is Aspartate carbamoyltransferase regulatory chain from Methanococcus maripaludis (strain DSM 14266 / JCM 13030 / NBRC 101832 / S2 / LL).